The primary structure comprises 739 residues: Tegument protein UL47 (739 aa).

The span at 1-13 shows a compositional bias: basic and acidic residues; the sequence is MDAARDGRPERRR. Disordered regions lie at residues 1-123 and 154-198; these read MDAA…QDYL and QFPP…DDAA. The short motif at 10 to 30 is the Nuclear localization signal element; the sequence is ERRRAVSGTYRTHPFQRPSAR. Residues 28–53 show a composition bias toward basic residues; that stretch reads SARRSAGRPARCGRRGRGAPRVRRPR. Residues 62–87 show a composition bias toward acidic residues; sequence EDTSEDENVYDYIDGDSSDSADDYDS. The Nuclear export signal signature appears at 94-121; sequence RGPNHGAGDAMDTDAPPERAPEGGAPQD. The short motif at 483 to 493 is the Nuclear export signal element; the sequence is LSAYLTLFVAL.

Belongs to the alphaherpesvirinae HHV-1 UL47 family. Interacts with US3 kinase. Interacts with UL31 and UL34; these interactions seem important for efficient virion nuclear egress. Interacts with UL41/VHS. Interacts with host DDB1. In terms of processing, monoubiquitinated. Phosphorylated by US3. This phosphorylation is required for proper nuclear localization.

Its subcellular location is the virion tegument. It is found in the host nucleus. It localises to the host cytoplasm. Its function is as follows. Tegument protein that can bind to various RNA transcripts. Plays a role in the attenuation of selective viral and cellular mRNA degradation by modulating the activity of host shutoff RNase UL41/VHS. Also plays a role in the primary envelopment of virions in the perinuclear space, probably by interacting with two nuclear egress proteins UL31 and UL34. This Bovine herpesvirus 1.1 (strain Cooper) (BoHV-1) protein is Tegument protein UL47.